We begin with the raw amino-acid sequence, 405 residues long: Peroxisome biogenesis factor 3 (405 aa).

Topologically, residues 1–26 (MENFQFEDLSPNKVSKVYQDLKKFGS) are cytoplasmic. Residues 27-49 (FLYNHKMGVFLVSFSSGVAYLYH) traverse the membrane as a helical segment. Residues 50–124 (NITQSHKRKQ…EKLKLTDQLK (75 aa)) lie on the Peroxisomal side of the membrane. The chain crosses the membrane as a helical span at residues 125–144 (VSIITKLFSVLYIIPMVTIF). The Cytoplasmic portion of the chain corresponds to 145 to 405 (NRLQINLIGK…NDLDFNKVQF (261 aa)).

This sequence belongs to the peroxin-3 family.

The protein resides in the peroxisome membrane. Functionally, involved in peroxisome biosynthesis. The chain is Peroxisome biogenesis factor 3 (pex3) from Dictyostelium discoideum (Social amoeba).